The following is a 106-amino-acid chain: UPF0145 protein TM_0763 (106 aa).

It belongs to the UPF0145 family.

This Thermotoga maritima (strain ATCC 43589 / DSM 3109 / JCM 10099 / NBRC 100826 / MSB8) protein is UPF0145 protein TM_0763.